Here is a 593-residue protein sequence, read N- to C-terminus: NADH-quinone oxidoreductase subunit C/D (593 aa).

The NADH dehydrogenase I subunit C stretch occupies residues 1–184 (MTADSVLSIP…DPYSLSAAKQ (184 aa)). The tract at residues 208–593 (DFMFLNLGPN…IDFVMADVDR (386 aa)) is NADH dehydrogenase I subunit D.

The protein in the N-terminal section; belongs to the complex I 30 kDa subunit family. This sequence in the C-terminal section; belongs to the complex I 49 kDa subunit family. In terms of assembly, NDH-1 is composed of 13 different subunits. Subunits NuoB, CD, E, F, and G constitute the peripheral sector of the complex.

The protein resides in the cell inner membrane. The enzyme catalyses a quinone + NADH + 5 H(+)(in) = a quinol + NAD(+) + 4 H(+)(out). In terms of biological role, NDH-1 shuttles electrons from NADH, via FMN and iron-sulfur (Fe-S) centers, to quinones in the respiratory chain. The immediate electron acceptor for the enzyme in this species is believed to be ubiquinone. Couples the redox reaction to proton translocation (for every two electrons transferred, four hydrogen ions are translocated across the cytoplasmic membrane), and thus conserves the redox energy in a proton gradient. The sequence is that of NADH-quinone oxidoreductase subunit C/D from Azotobacter vinelandii (strain DJ / ATCC BAA-1303).